A 242-amino-acid polypeptide reads, in one-letter code: Phosphoribosylaminoimidazole-succinocarboxamide synthase (242 aa).

The protein belongs to the SAICAR synthetase family.

The enzyme catalyses 5-amino-1-(5-phospho-D-ribosyl)imidazole-4-carboxylate + L-aspartate + ATP = (2S)-2-[5-amino-1-(5-phospho-beta-D-ribosyl)imidazole-4-carboxamido]succinate + ADP + phosphate + 2 H(+). The protein operates within purine metabolism; IMP biosynthesis via de novo pathway; 5-amino-1-(5-phospho-D-ribosyl)imidazole-4-carboxamide from 5-amino-1-(5-phospho-D-ribosyl)imidazole-4-carboxylate: step 1/2. The polypeptide is Phosphoribosylaminoimidazole-succinocarboxamide synthase (Prochlorococcus marinus subsp. pastoris (strain CCMP1986 / NIES-2087 / MED4)).